A 294-amino-acid chain; its full sequence is Dolichol-phosphate mannosyltransferase (294 aa).

The interval 1 to 27 (MSIALDMDASAKMRKQPGSSGWSTSST) is disordered. The Cytoplasmic segment spans residues 1–263 (MSIALDMDAS…QQLVELYRFR (263 aa)). Low complexity predominate over residues 17-27 (PGSSGWSTSST). P35, E39, V70, D72, D123, A124, D125, Q127, R151, K211, R237, and K243 together coordinate GDP-alpha-D-mannose. Residues D125 and Q127 each contribute to the Mg(2+) site. Residues D125 and Q127 each coordinate Mn(2+). Residues 264 to 284 (FGTVPIVFVLIVLLVLALYIW) traverse the membrane as a helical segment. Residues 285–294 (SHVLAPMLGA) are Lumenal-facing.

Belongs to the glycosyltransferase 2 family. Mg(2+) serves as cofactor. Requires Mn(2+) as cofactor. It depends on Ca(2+) as a cofactor.

The protein resides in the endoplasmic reticulum membrane. The catalysed reaction is a di-trans,poly-cis-dolichyl phosphate + GDP-alpha-D-mannose = a di-trans,poly-cis-dolichyl beta-D-mannosyl phosphate + GDP. It participates in protein modification; protein glycosylation. In terms of biological role, transfers mannose from GDP-mannose to dolichol monophosphate to form dolichol phosphate mannose (Dol-P-Man) which is the mannosyl donor in pathways leading to N-glycosylation, glycosyl phosphatidylinositol membrane anchoring, and O-mannosylation of proteins. This Mycosarcoma maydis (Corn smut fungus) protein is Dolichol-phosphate mannosyltransferase (DPM1).